The sequence spans 84 residues: Kunitz-type neurotoxin MitTx-alpha (84 aa).

The first 24 residues, M1 to S24, serve as a signal peptide directing secretion. The residue at position 25 (Q25) is a Pyrrolidone carboxylic acid. The BPTI/Kunitz inhibitor domain occupies C31–C82. 3 disulfide bridges follow: C31/C82, C41/C65, and C57/C78.

This sequence belongs to the venom Kunitz-type family. Heterodimer of an alpha (Kunitz-type) and a beta (phospholipase A2 homolog) chains; non-covalently-linked. As to expression, expressed by the venom gland.

It is found in the secreted. Its function is as follows. MitTx, a heteromeric complex between Kunitz- and phospholipase-A2-like proteins, potently, persistently and selectively activates rat and chicken acid-sensing ion channel ASIC1. Both alternatively spliced rat isoforms ASIC1a and ASIC1b are activated, with a higher potency for ASIC1a (EC(50)=9.4 nM) vs ASIC1b (EC(50)=23 nM). The rat ASIC3 subtype is also sensitive to the heterodimer, but with a lower potency (EC(50)=830 nM). On rat ASIC2a, the toxin shows a very weak activation, but produces a remarkable potentiation (&gt;100-fold) of protons when the extracellular pH drops below neutrality. Moderate and weak activations are also observed on the heterotrimers Asic1a-Asic2a and Asic1a-Asic3 (expressed in CHO cells), respectively. The binding sites of the beta subunit of MitTx and the spider psalmotoxin-1 overlap, explaining why these toxins are mutually exclusive. In vivo, the heterodimer elicits robust pain-related behavior in mice by activation of ASIC1 channels on capsaicin-sensitive nerve fibers. This chain is Kunitz-type neurotoxin MitTx-alpha, found in Micrurus tener tener (Texas coral snake).